A 425-amino-acid polypeptide reads, in one-letter code: tRNA(Ile)-lysidine synthase (425 aa).

Ser37–Ser42 lines the ATP pocket.

The protein belongs to the tRNA(Ile)-lysidine synthase family.

The protein localises to the cytoplasm. The catalysed reaction is cytidine(34) in tRNA(Ile2) + L-lysine + ATP = lysidine(34) in tRNA(Ile2) + AMP + diphosphate + H(+). Functionally, ligates lysine onto the cytidine present at position 34 of the AUA codon-specific tRNA(Ile) that contains the anticodon CAU, in an ATP-dependent manner. Cytidine is converted to lysidine, thus changing the amino acid specificity of the tRNA from methionine to isoleucine. This Leptospira borgpetersenii serovar Hardjo-bovis (strain JB197) protein is tRNA(Ile)-lysidine synthase.